The primary structure comprises 133 residues: MSWQTYVDDHLMCDIDGQGQHLAAASIVGHDGSIWAQSASFPQLKPEEITGIMKDFDEPGHLAPTGLYIAGTKYMVIQGESGAVIRGKKGSGGITIKKTGQALVFGIYEEPVTPGQCNMVVERLGDYLIEQGM.

It belongs to the profilin family. In terms of assembly, occurs in many kinds of cells as a complex with monomeric actin in a 1:1 ratio.

The protein resides in the cytoplasm. It localises to the cytoskeleton. Its function is as follows. Binds to actin and affects the structure of the cytoskeleton. At high concentrations, profilin prevents the polymerization of actin, whereas it enhances it at low concentrations. By binding to PIP2, it inhibits the formation of IP3 and DG. The chain is Profilin from Mercurialis annua (Annual mercury).